A 389-amino-acid polypeptide reads, in one-letter code: MNDVIRDFFKMESAGGILLVIAAAIAMVIANSPLNESYQAVLHTYVFGMSVSHWINDGLMAIFFLLIGLEVKRELLEGALKSRETAIFPAIAAVGGMLAPALIYVAFNGNDPEAIKGWAIPAATDIAFALGIMALLGKRVPVSLKVFLLALAIIDDLGVVVIIALFYSGDLSTLALTVGFAMTGVLFMLNAKNVTKLIWYIVVGFILWVAVLKSGVHATLAGVVIGFSIPLQGKKGEHSPLKHMEHALHPYVAFAILPVFAFANAGISLEGVSLSGLTSMLPLGIALGLLVGKPLGIFTFSWAAVKFGVAKLPEGVNFKHIFAVSVLCGIGFTMSIFISSLAFGGANPDFDTYSRLGILMGSTTAAVLGYFLLHVSLPKTAAESEKAIS.

11 helical membrane passes run 14–34 (AGGI…NSPL), 47–67 (FGMS…FLLI), 87–107 (IFPA…YVAF), 117–137 (GWAI…ALLG), 146–166 (VFLL…IALF), 171–191 (LSTL…MLNA), 197–217 (LIWY…SGVH), 252–272 (VAFA…LEGV), 280–300 (MLPL…IFTF), 321–341 (IFAV…ISSL), and 356–376 (LGIL…LHVS).

It belongs to the NhaA Na(+)/H(+) (TC 2.A.33) antiporter family.

It localises to the cell inner membrane. It carries out the reaction Na(+)(in) + 2 H(+)(out) = Na(+)(out) + 2 H(+)(in). Functionally, na(+)/H(+) antiporter that extrudes sodium in exchange for external protons. The sequence is that of Na(+)/H(+) antiporter NhaA 1 from Vibrio vulnificus (strain CMCP6).